The primary structure comprises 425 residues: Serine--tRNA ligase (425 aa).

Residue 230–232 coordinates L-serine; sequence TAE. ATP is bound at residue 261–263; sequence RSE. Position 284 (Glu284) interacts with L-serine. 348 to 351 serves as a coordination point for ATP; sequence EISS. Ser384 lines the L-serine pocket.

Belongs to the class-II aminoacyl-tRNA synthetase family. Type-1 seryl-tRNA synthetase subfamily. Homodimer. The tRNA molecule binds across the dimer.

Its subcellular location is the cytoplasm. It carries out the reaction tRNA(Ser) + L-serine + ATP = L-seryl-tRNA(Ser) + AMP + diphosphate + H(+). It catalyses the reaction tRNA(Sec) + L-serine + ATP = L-seryl-tRNA(Sec) + AMP + diphosphate + H(+). It participates in aminoacyl-tRNA biosynthesis; selenocysteinyl-tRNA(Sec) biosynthesis; L-seryl-tRNA(Sec) from L-serine and tRNA(Sec): step 1/1. Functionally, catalyzes the attachment of serine to tRNA(Ser). Is also able to aminoacylate tRNA(Sec) with serine, to form the misacylated tRNA L-seryl-tRNA(Sec), which will be further converted into selenocysteinyl-tRNA(Sec). The protein is Serine--tRNA ligase of Streptococcus pyogenes serotype M1.